The following is a 200-amino-acid chain: Lipopolysaccharide core heptose(II)-phosphate phosphatase (200 aa).

Residues 1 to 25 (MLAFCRSSLKSKKYFIILLALAAIA) form the signal peptide.

It belongs to the phosphoglycerate mutase family. Ais subfamily.

Its subcellular location is the periplasm. Its pathway is bacterial outer membrane biogenesis; lipopolysaccharide metabolism. Functionally, catalyzes the dephosphorylation of heptose(II) of the outer membrane lipopolysaccharide core. This is Lipopolysaccharide core heptose(II)-phosphate phosphatase from Escherichia coli O7:K1 (strain IAI39 / ExPEC).